A 248-amino-acid chain; its full sequence is ATP synthase subunit a, chloroplastic (248 aa).

5 helical membrane passes run 39–59 (QVLI…ILAV), 96–116 (VPFI…GALF), 135–155 (INTT…AGLT), 200–220 (LVVV…VMFL), and 221–241 (GLFT…AYIG).

Belongs to the ATPase A chain family. As to quaternary structure, F-type ATPases have 2 components, CF(1) - the catalytic core - and CF(0) - the membrane proton channel. CF(1) has five subunits: alpha(3), beta(3), gamma(1), delta(1), epsilon(1). CF(0) has four main subunits: a, b, b' and c.

It is found in the plastid. The protein resides in the chloroplast thylakoid membrane. Its function is as follows. Key component of the proton channel; it plays a direct role in the translocation of protons across the membrane. The protein is ATP synthase subunit a, chloroplastic of Pelargonium hortorum (Common geranium).